The primary structure comprises 658 residues: Probable mitochondrial Rho GTPase gemA (658 aa).

At 1 to 633 (MKNNIKVILI…NGSNGSNNSN (633 aa)) the chain is on the cytoplasmic side. The Miro 1 domain maps to 2–175 (KNNIKVILIG…LYASQTSVFF (174 aa)). GTP-binding positions include 11-18 (GDEQVGKS), 57-62 (DTFDDG), and 118-121 (NKLD). 2 consecutive EF-hand domains span residues 191 to 226 (GCERALKRIFKLCDHDNDGSLSEEEINYFQTKCGHE) and 311 to 346 (MGNEFFKSLFEKYDSDSDGVLSSFDLVSLFSTTPKI). Ca(2+)-binding residues include Asp204, Asp206, Asp208, Ser210, Glu215, Asp324, Asp326, Asp328, and Asp335. The 197-residue stretch at 420–616 (RNIVNCYVFG…YHEMMETIVN (197 aa)) folds into the Miro 2 domain. GTP contacts are provided by residues 429–436 (GAEAVGKT), 466–468 (LLK), and 530–533 (TKNN). A disordered region spans residues 532-575 (NNNNNNNNNNNNNNNNNNNNLNNNNNNINNNNNNNNNNTTTTNA). A helical; Anchor for type IV membrane protein membrane pass occupies residues 634-656 (ILTYLVIAAGVAGVGLLLSKYLA). Topologically, residues 657–658 (KK) are mitochondrial intermembrane.

Belongs to the mitochondrial Rho GTPase family.

Its subcellular location is the mitochondrion outer membrane. Functionally, mitochondrial GTPase involved in mitochondrial trafficking. Probably involved in control of anterograde transport of mitochondria and their subcellular distribution. This is Probable mitochondrial Rho GTPase gemA (gemA) from Dictyostelium discoideum (Social amoeba).